The primary structure comprises 527 residues: Putative ribose/galactose/methyl galactoside import ATP-binding protein 2 (527 aa).

The interval 1-31 (MFTARVARPMAGDDAPAASSGSTGSSAPPAS) is disordered. Positions 12–31 (GDDAPAASSGSTGSSAPPAS) are enriched in low complexity. ABC transporter domains follow at residues 38–274 (LEVR…VGRE) and 284–523 (VPIG…RIMD). 70-77 (GENGAGKS) contributes to the ATP binding site.

This sequence belongs to the ABC transporter superfamily. Carbohydrate importer 2 (CUT2) (TC 3.A.1.2) family.

It localises to the cell inner membrane. The enzyme catalyses D-ribose(out) + ATP + H2O = D-ribose(in) + ADP + phosphate + H(+). The catalysed reaction is D-galactose(out) + ATP + H2O = D-galactose(in) + ADP + phosphate + H(+). In terms of biological role, part of an ABC transporter complex involved in carbohydrate import. Could be involved in ribose, galactose and/or methyl galactoside import. Responsible for energy coupling to the transport system. The protein is Putative ribose/galactose/methyl galactoside import ATP-binding protein 2 of Burkholderia lata (strain ATCC 17760 / DSM 23089 / LMG 22485 / NCIMB 9086 / R18194 / 383).